The sequence spans 135 residues: Immunity protein RhsIA (135 aa).

A disordered region spans residues arginine 58–aspartate 77.

Functionally, immunity component of a toxin-immunity protein module, which functions as a cellular contact-dependent growth inhibition (CDI) system. Specifically inhibits its cognate toxin RhsA. Cell contact is necessary for growth inhibition. This Dickeya dadantii (strain 3937) (Erwinia chrysanthemi (strain 3937)) protein is Immunity protein RhsIA (rhsIA).